The sequence spans 42 residues: Photosystem I reaction center subunit IX (42 aa).

The helical transmembrane segment at 7–27 (YLSVAPVLSTLWFGALAGLLI) threads the bilayer.

The protein belongs to the PsaJ family.

It is found in the plastid. It localises to the chloroplast thylakoid membrane. Its function is as follows. May help in the organization of the PsaE and PsaF subunits. This Platanus occidentalis (Sycamore) protein is Photosystem I reaction center subunit IX.